The following is a 381-amino-acid chain: EPS I polysaccharide export outer membrane protein EpsA (381 aa).

The N-terminal stretch at 1–23 (MFVSIPNIRKAVVSLSVVPLLAA) is a signal peptide. Cys24 carries N-palmitoyl cysteine lipidation. Cys24 carries S-diacylglycerol cysteine lipidation.

This sequence belongs to the BexD/CtrA/VexA family.

It is found in the cell outer membrane. Its function is as follows. Probably involved in polymerization and/or export of exopolysaccharide EPS I which functions as a virulence factor. The sequence is that of EPS I polysaccharide export outer membrane protein EpsA (epsA) from Ralstonia nicotianae (strain ATCC BAA-1114 / GMI1000) (Ralstonia solanacearum).